The primary structure comprises 175 residues: MPKEQYMCQLCANHGIFNQPKKGHKQKCPYRTCPCSLCALNTKRRALDQIERQLKHTNEPMTGQTATSMASPTPECPLSPTTPKMTPHTPTSGKDTFRNSISSSNMAFTVQLPATITKKELKLLRRDDTPLQNSLERPFPRSIDEAIETIKKEKMSSIFHSAEMLAVGESATSLI.

Residues 8–56 (CQLCANHGIFNQPKKGHKQKCPYRTCPCSLCALNTKRRALDQIERQLKH) constitute a DNA-binding region (DM). Residues 58–93 (NEPMTGQTATSMASPTPECPLSPTTPKMTPHTPTSG) are disordered. Positions 59–71 (EPMTGQTATSMAS) are enriched in polar residues. Residues 81-91 (TTPKMTPHTPT) are compositionally biased toward low complexity.

Expressed in a limited number of non-sex-specific tissues in males, including 6-8 unidentified neurons of the head, ventral body wall muscle, and the PHCL/R neurons.

It is found in the nucleus. Functionally, probable transcription factor that plays a role in the development of the dopaminergic neurons of the male-specific genital sensilla (simple sense organs) known as rays, by negatively regulating the activity of the transcription factor ast-1. Involved in male mating behavior, probably as a result of a role in the differentiation of male-specific diagonal muscles. Required for development of the male proctodeum. May be dispensable in hermaphrodites. The chain is DM domain-containing protein mab-23 from Caenorhabditis elegans.